Reading from the N-terminus, the 932-residue chain is MTNERKEVSEAPVNFGANLGLMLDLYDDFLQDPSSVPEDLQVLFSTIKNDDSIVPALKSTSSQNSDGTIKRVMRLIDNIRQYGHLKADIYPVNPPKRKHVPKLEIEDFDLDQQTLEGISAGIVSDHFADIYDNAYEAILRMEKRYKGPIAFEYTHINNNTERGWLKRRIETPYKVTLNNNEKRALFKQLAYVEGFEKYLHKNFVGAKRFSIEGVDALVPMLQRTITIAAKEGIKNIQIGMAHRGRLNVLTHVLEKPYEMMISEFMHTDPMKFLPEDGSLQLTAGWTGDVKYHLGGIKTTDSYGTMQRIALANNPSHLEIVAPVVEGRTRAAQDDTQRAGAPTTDHHKAMPIIIHGDAAYPGQGINFETMNLGNLKGYSTGGSLHIITNNRIGFTTEPIDARSTTYSTDVAKGYDVPIFHVNADDVEATIEAIDIAMEFRKEFHKDVVIDLVGYRRFGHNEMDEPSITNPVPYQNIRKHDSVEYVFGKKLVNEGVISEDEMHSFIEQVQKELRQAHDKINKADKMDNPDMEKPADLALPLQADEQSFTFDHLKEINDALLTYPDGFNILKKLNKVLEKRHEPFNKEDGLVDWAQAEQLAFATILQDGTPIRLTGQDSERGTFSHRHAVLHDEQTGETYTPLHHVPDQKATFDIHNSPLSEAAVVGFEYGYNVENKKSFNIWEAQYGDFANMSQMIFDNFLFSSRSKWGERSGLTLFLPHAYEGQGPEHSSARLERFLQLAAENNCTVVNLSSSSNYFHLLRAQAASLDSEQMRPLVVMSPKSLLRNKTVAKPIDEFTSGGFEPILTESYQADKVTKVILATGKMFIDLKEALAKNPDESVLLVAIERLYPFPEEEIEALLAQLPNLEEVSWVQEEPKNQGAWLYVYPYVKVLVADKYDLSYHGRIQRAAPAEGDGEIHKLVQNKIIENALKNN.

Belongs to the alpha-ketoglutarate dehydrogenase family. In terms of assembly, homodimer. Part of the 2-oxoglutarate dehydrogenase (OGDH) complex composed of E1 (2-oxoglutarate dehydrogenase), E2 (dihydrolipoamide succinyltransferase) and E3 (dihydrolipoamide dehydrogenase); the complex contains multiple copies of the three enzymatic components (E1, E2 and E3). The cofactor is thiamine diphosphate.

The enzyme catalyses N(6)-[(R)-lipoyl]-L-lysyl-[protein] + 2-oxoglutarate + H(+) = N(6)-[(R)-S(8)-succinyldihydrolipoyl]-L-lysyl-[protein] + CO2. Functionally, E1 component of the 2-oxoglutarate dehydrogenase (OGDH) complex which catalyzes the decarboxylation of 2-oxoglutarate, the first step in the conversion of 2-oxoglutarate to succinyl-CoA and CO(2). This chain is 2-oxoglutarate dehydrogenase E1 component, found in Staphylococcus aureus (strain USA300).